Reading from the N-terminus, the 357-residue chain is Heat-inducible transcription repressor HrcA (357 aa).

This sequence belongs to the HrcA family.

Functionally, negative regulator of class I heat shock genes (grpE-dnaK-dnaJ and groELS operons). Prevents heat-shock induction of these operons. This is Heat-inducible transcription repressor HrcA from Chlorobium luteolum (strain DSM 273 / BCRC 81028 / 2530) (Pelodictyon luteolum).